The following is a 1052-amino-acid chain: CCAAT/enhancer-binding protein zeta (1052 aa).

Disordered stretches follow at residues 1 to 40 (MSAD…KNGF), 122 to 158 (VENK…VSKA), and 621 to 677 (SQLD…AEKP). Acidic residues predominate over residues 23-34 (EDPDEEDEEDGD). Positions 122-150 (VENKKQKATEGKKTSEKKVKNKTVAEQRP) are enriched in basic and acidic residues. Residues 627-643 (PESDEENFVDVGDDSDD) are compositionally biased toward acidic residues. Ser-629 and Ser-641 each carry phosphoserine. The segment covering 644–677 (EKFTDADKGTATDAVKEVESKETEPESSAEAEKP) has biased composition (basic and acidic residues). Ser-837 carries the post-translational modification Phosphoserine. Residues 876-969 (KGAKADLEDS…QGQKKKKKSF (94 aa)) form a disordered region. A compositionally biased stretch (acidic residues) spans 883–932 (EDSESSDGELGDLDDDEVSLGSMNDEDFEIDEDGGTFMDVSDDESEDAPE). Phosphoserine is present on residues Ser-958, Ser-972, and Ser-977. Positions 1032-1052 (KKKKNFRKKMKAPQKPKRQRK) are disordered.

The protein belongs to the CBF/MAK21 family. Ubiquitous.

Its subcellular location is the nucleus. In terms of biological role, stimulates transcription from the HSP70 promoter. The protein is CCAAT/enhancer-binding protein zeta (Cebpz) of Mus musculus (Mouse).